The sequence spans 220 residues: NADH-quinone oxidoreductase subunit I (220 aa).

4Fe-4S ferredoxin-type domains lie at 71–102 (LQRL…IITH) and 112–141 (DSYT…MGNR). Residues C82, C85, C88, C92, C121, C124, C127, and C131 each contribute to the [4Fe-4S] cluster site. Residues 187-220 (MQATPLDYVQEPSKEESKEETPTRSESHKGDENV) form a disordered region. Residues 198–220 (PSKEESKEETPTRSESHKGDENV) show a composition bias toward basic and acidic residues.

This sequence belongs to the complex I 23 kDa subunit family. As to quaternary structure, NDH-1 is composed of 14 different subunits. Subunits NuoA, H, J, K, L, M, N constitute the membrane sector of the complex. [4Fe-4S] cluster is required as a cofactor.

The protein resides in the cell inner membrane. It carries out the reaction a quinone + NADH + 5 H(+)(in) = a quinol + NAD(+) + 4 H(+)(out). Its function is as follows. NDH-1 shuttles electrons from NADH, via FMN and iron-sulfur (Fe-S) centers, to quinones in the respiratory chain. The immediate electron acceptor for the enzyme in this species is believed to be ubiquinone. Couples the redox reaction to proton translocation (for every two electrons transferred, four hydrogen ions are translocated across the cytoplasmic membrane), and thus conserves the redox energy in a proton gradient. This Helicobacter pylori (strain G27) protein is NADH-quinone oxidoreductase subunit I.